A 459-amino-acid polypeptide reads, in one-letter code: Mitochondrial distribution and morphology protein 34 (459 aa).

The 190-residue stretch at 1-190 (MSFRFNEAVF…LPSLIFNTSQ (190 aa)) folds into the SMP-LTD domain. A compositionally biased stretch (basic and acidic residues) spans 338-347 (RSNSNDDNAK). The segment at 338–375 (RSNSNDDNAKPRRRKIKCKKTRTPSNLQSQGEQAVDDS) is disordered. A compositionally biased stretch (basic residues) spans 348–359 (PRRRKIKCKKTR).

The protein belongs to the MDM34 family. In terms of assembly, component of the ER-mitochondria encounter structure (ERMES) or MDM complex, composed of MMM1, MDM10, MDM12 and MDM34. Ubiquitinated by a SCF (SKP1-CUL1-F-box protein) E3 ubiquitin-protein ligase complex containing the F-box protein MDM30. Ubiquitination is important for mitochondrial integrity.

It localises to the mitochondrion outer membrane. Component of the ERMES/MDM complex, which serves as a molecular tether to connect the endoplasmic reticulum (ER) and mitochondria. Components of this complex are involved in the control of mitochondrial shape and protein biogenesis, and function in nonvesicular lipid trafficking between the ER and mitochondria. MDM34 is required for the interaction of the ER-resident membrane protein MMM1 and the outer mitochondrial membrane-resident beta-barrel protein MDM10. This is Mitochondrial distribution and morphology protein 34 from Saccharomyces cerevisiae (strain AWRI1631) (Baker's yeast).